The following is a 274-amino-acid chain: 2,3,4,5-tetrahydropyridine-2,6-dicarboxylate N-succinyltransferase (274 aa).

This sequence belongs to the transferase hexapeptide repeat family.

The protein resides in the cytoplasm. The catalysed reaction is (S)-2,3,4,5-tetrahydrodipicolinate + succinyl-CoA + H2O = (S)-2-succinylamino-6-oxoheptanedioate + CoA. It functions in the pathway amino-acid biosynthesis; L-lysine biosynthesis via DAP pathway; LL-2,6-diaminopimelate from (S)-tetrahydrodipicolinate (succinylase route): step 1/3. This chain is 2,3,4,5-tetrahydropyridine-2,6-dicarboxylate N-succinyltransferase, found in Erwinia tasmaniensis (strain DSM 17950 / CFBP 7177 / CIP 109463 / NCPPB 4357 / Et1/99).